Reading from the N-terminus, the 443-residue chain is Probable lysophospholipase BODYGUARD 5 (443 aa).

A signal peptide spans 1–52; sequence MITSSFSEKCTSVINGAPSWAVFFLFDLLDYFLCIVFRFLDEVMEEKSESCH. C53 is lipidated: N-palmitoyl cysteine. The 106-residue stretch at 163-268 folds into the AB hydrolase-1 domain; sequence VIFVHGFLAS…VKSVALVAPP (106 aa). The active site involves H167. Catalysis depends on S242, which acts as the Nucleophile. Active-site charge relay system residues include D387 and H415.

It localises to the cell membrane. The protein localises to the secreted. It is found in the cell wall. In terms of biological role, involved in cuticle development and morphogenesis. The protein is Probable lysophospholipase BODYGUARD 5 of Arabidopsis thaliana (Mouse-ear cress).